We begin with the raw amino-acid sequence, 329 residues long: Ketol-acid reductoisomerase (NADP(+)) (329 aa).

Residues 2–182 form the KARI N-terminal Rossmann domain; that stretch reads TQLFYDTDAD…GGTRAGILET (181 aa). NADP(+) contacts are provided by residues 25 to 28, S51, S53, and 83 to 86; these read YGSQ and DEFQ. Residue H108 is part of the active site. G134 provides a ligand contact to NADP(+). One can recognise a KARI C-terminal knotted domain in the interval 183–328; sequence NFKEETETDL…KGLRAMFSWL (146 aa). Mg(2+)-binding residues include D191, E195, E227, and E231. S252 provides a ligand contact to substrate.

This sequence belongs to the ketol-acid reductoisomerase family. Requires Mg(2+) as cofactor.

It catalyses the reaction (2R)-2,3-dihydroxy-3-methylbutanoate + NADP(+) = (2S)-2-acetolactate + NADPH + H(+). The catalysed reaction is (2R,3R)-2,3-dihydroxy-3-methylpentanoate + NADP(+) = (S)-2-ethyl-2-hydroxy-3-oxobutanoate + NADPH + H(+). Its pathway is amino-acid biosynthesis; L-isoleucine biosynthesis; L-isoleucine from 2-oxobutanoate: step 2/4. The protein operates within amino-acid biosynthesis; L-valine biosynthesis; L-valine from pyruvate: step 2/4. Involved in the biosynthesis of branched-chain amino acids (BCAA). Catalyzes an alkyl-migration followed by a ketol-acid reduction of (S)-2-acetolactate (S2AL) to yield (R)-2,3-dihydroxy-isovalerate. In the isomerase reaction, S2AL is rearranged via a Mg-dependent methyl migration to produce 3-hydroxy-3-methyl-2-ketobutyrate (HMKB). In the reductase reaction, this 2-ketoacid undergoes a metal-dependent reduction by NADPH to yield (R)-2,3-dihydroxy-isovalerate. This chain is Ketol-acid reductoisomerase (NADP(+)), found in Prochlorococcus marinus subsp. pastoris (strain CCMP1986 / NIES-2087 / MED4).